A 256-amino-acid polypeptide reads, in one-letter code: uncharacterized protein (256 aa).

The next 2 helical transmembrane spans lie at 155–175 (ITGM…GLWL) and 203–223 (ITTT…YLLI).

The protein localises to the cell membrane. This is an uncharacterized protein from Mycobacterium bovis (strain ATCC BAA-935 / AF2122/97).